We begin with the raw amino-acid sequence, 281 residues long: Acetyl-coenzyme A carboxylase carboxyl transferase subunit beta (281 aa).

Residues isoleucine 23 to asparagine 281 form the CoA carboxyltransferase N-terminal domain. Zn(2+) contacts are provided by cysteine 27, cysteine 30, cysteine 46, and cysteine 49. Residues cysteine 27–cysteine 49 form a C4-type zinc finger.

The protein belongs to the AccD/PCCB family. In terms of assembly, acetyl-CoA carboxylase is a heterohexamer composed of biotin carboxyl carrier protein (AccB), biotin carboxylase (AccC) and two subunits each of ACCase subunit alpha (AccA) and ACCase subunit beta (AccD). The cofactor is Zn(2+).

The protein localises to the cytoplasm. The enzyme catalyses N(6)-carboxybiotinyl-L-lysyl-[protein] + acetyl-CoA = N(6)-biotinyl-L-lysyl-[protein] + malonyl-CoA. It participates in lipid metabolism; malonyl-CoA biosynthesis; malonyl-CoA from acetyl-CoA: step 1/1. In terms of biological role, component of the acetyl coenzyme A carboxylase (ACC) complex. Biotin carboxylase (BC) catalyzes the carboxylation of biotin on its carrier protein (BCCP) and then the CO(2) group is transferred by the transcarboxylase to acetyl-CoA to form malonyl-CoA. The sequence is that of Acetyl-coenzyme A carboxylase carboxyl transferase subunit beta from Alteromonas mediterranea (strain DSM 17117 / CIP 110805 / LMG 28347 / Deep ecotype).